The sequence spans 164 residues: MTQAKEVLASYEQYLRSLGQKSSSDMKKTLQTNPVYFDFCTELQGDLPWEDSGKYVPLLFEVWDDIKASLLPVFQTRKSRCDQNEMLKGIVCLLASLHWTAGEPVKSLDWQELREKSYPAKPINWAERVEFILLKPTQYHCFIQLDELITEMKKHFYKYHAMNR.

Phosphoserine is present on Ser-117.

This is an uncharacterized protein from Bacillus subtilis (strain 168).